A 72-amino-acid chain; its full sequence is Penaeidin-2a (72 aa).

The first 21 residues, 1 to 21, serve as a signal peptide directing secretion; sequence MRLVVCLVFLASFALVCQGEA. 3 disulfides stabilise this stretch: Cys45/Cys59, Cys48/Cys66, and Cys60/Cys67. Lys71 is modified (lysine amide).

Higher expression in hemocytes and to a lesser extent in heart, testis, gills, intestine, lymphoid organ and hepatopancreas. Traces in eyes and subcuticular epithelium. Not present in the brain.

It is found in the cytoplasmic granule. In terms of biological role, antibacterial activity against M.luteus and E.coli bacteria. Antifungal activity against N.crassa and F.oxysporum. Presents chitin-binding activity. This chain is Penaeidin-2a, found in Penaeus vannamei (Whiteleg shrimp).